Reading from the N-terminus, the 236-residue chain is MAKKQEFTFKQFHINQDQCAMKVGTDGILLGAWANINQANTLLDLGTGTGLIALMLAQRSPEHCQISAVELDQLAYLQAKDNIQQSPWANKIKIFQQDIIVFAQDCEHKFDVITANPPYFKQGVDCASKQRNLARYTLTQSHLDWLNAAEKLLNLTGEIHLILPFEEGKSLQKKCGLFCIRECKIITKAGKTPQRLLLSFSREERKCEESQLVIYDRNNQYSTEFKTLTQDFYLNF.

The protein belongs to the methyltransferase superfamily. tRNA (adenine-N(6)-)-methyltransferase family.

The protein localises to the cytoplasm. It carries out the reaction adenosine(37) in tRNA1(Val) + S-adenosyl-L-methionine = N(6)-methyladenosine(37) in tRNA1(Val) + S-adenosyl-L-homocysteine + H(+). Its function is as follows. Specifically methylates the adenine in position 37 of tRNA(1)(Val) (anticodon cmo5UAC). The protein is tRNA1(Val) (adenine(37)-N6)-methyltransferase of Histophilus somni (strain 2336) (Haemophilus somnus).